The following is a 787-amino-acid chain: Protein smoothened (787 aa).

The N-terminal stretch at 1 to 27 (MAAARPARGPELPLLGLLLLLLLGDPG) is a signal peptide. Over 28–233 (RGAASSGNAT…EAEHQDMHSY (206 aa)) the chain is Extracellular. The interval 30-60 (AASSGNATGPGPRSAGGSARRSAAVTGPPPP) is disordered. N-linked (GlcNAc...) asparagine glycosylation is present at Asn35. The span at 38-53 (GPGPRSAGGSARRSAA) shows a compositional bias: low complexity. Intrachain disulfides connect Cys64-Cys178, Cys70-Cys134, Cys78-Cys127, Cys118-Cys154, and Cys147-Cys169. The 117-residue stretch at 65–181 (GRAAPCEPLR…DRFPEGCTNE (117 aa)) folds into the FZ domain. Position 95 (Asp95) interacts with cholesterol. An N-linked (GlcNAc...) asparagine glycan is attached at Asn188. 2 disulfides stabilise this stretch: Cys193/Cys213 and Cys217/Cys295. The chain crosses the membrane as a helical span at residues 234-254 (IAAFGAVTGLCTLFTLATFVA). The Cytoplasmic segment spans residues 255–262 (DWRNSNRY). The helical transmembrane segment at 263-283 (PAVILFYVNACFFVGSIGWLA) threads the bilayer. Over 284–314 (QFMDGARREIVCRADGTMRLGEPTSNETLSC) the chain is Extracellular. N-linked (GlcNAc...) asparagine glycosylation occurs at Asn309. An intrachain disulfide couples Cys314 to Cys390. Residues 315–335 (VIIFVIVYYALMAGVVWFVVL) traverse the membrane as a helical segment. Topologically, residues 336–358 (TYAWHTSFKALGTTYQPLSGKTS) are cytoplasmic. The helical transmembrane segment at 359–379 (YFHLLTWSLPFVLTVAILAVA) threads the bilayer. The Extracellular segment spans residues 380–402 (QVDGDSVSGICFVGYKNYRYRAG). Tyr394 contributes to the cholesterol binding site. Residues 403 to 423 (FVLAPIGLVLIVGGYFLIRGV) form a helical membrane-spanning segment. Residues 424–451 (MTLFSIKSNHPGLLSEKAASKINETMLR) are Cytoplasmic-facing. A helical transmembrane segment spans residues 452–472 (LGIFGFLAFGFVLITFSCHFY). Residues 473–524 (DFFNQAEWERSFRDYVLCQANVTIGLPTKQPIPDCEIKNRPSLLVEKINLFA) are Extracellular-facing. Residues Cys490 and Cys507 are joined by a disulfide bond. Residues 525-545 (MFGTGIAMSTWVWTKATLLIW) form a helical membrane-spanning segment. The interval 538-569 (TKATLLIWRRTWCRLTGQSDDEPKRIKKSKMI) is interaction with BBS5 and BBS7. Topologically, residues 546–787 (RRTWCRLTGQ…TELMDADSDF (242 aa)) are cytoplasmic. Phosphoserine occurs at positions 556, 574, and 590. The tract at residues 570 to 653 (AKAFSKRHEL…TPVPPEEQAN (84 aa)) is required for interaction with PRKACA. The interval 581–593 (QNPGQELSFSMHT) is interaction with DLG5. Thr593 carries the post-translational modification Phosphothreonine. A phosphoserine mark is found at Ser595 and Ser638. Thr640 and Thr644 each carry phosphothreonine. Phosphoserine is present on Ser662. The disordered stretch occupies residues 667–704 (KRLGRKKKRRKRKKEVCPLAPPPELHPPAPAPSTIPRL). A compositionally biased stretch (basic residues) spans 668–680 (RLGRKKKRRKRKK). Over residues 685 to 699 (LAPPPELHPPAPAPS) the composition is skewed to pro residues.

Belongs to the G-protein coupled receptor Fz/Smo family. Homodimer. Interacts (via C-terminus) with protein kinase A catalytic subunit PRKACA; interacts with free PRKACA subunits and the interaction leads to sequestration of PRKACA at the membrane, preventing PRKACA-mediated phosphorylation of GLI transcription factors. Interacts with ARRB2. Interacts with KIF7. Interacts with BBS5 and BBS7; the interactions are indicative for the association of SMO with the BBsome complex to facilitate ciliary localization of SMO. Interacts with DLG5 and SDCBP. Interacts with GAS8/DRC4. In terms of processing, phosphorylation by GRK kinases is required for interaction with protein kinase A catalytic subunit PRKACA.

It localises to the cell membrane. It is found in the cell projection. Its subcellular location is the cilium. G protein-coupled receptor which associates with the patched protein (PTCH) to transduce hedgehog protein signaling. Binding of sonic hedgehog (SHH) to its receptor patched prevents inhibition of smoothened (SMO) by patched. When active, SMO binds to and sequesters protein kinase A catalytic subunit PRKACA at the cell membrane, preventing PRKACA-mediated phosphorylation of GLI transcription factors which releases the GLI proteins from PRKACA-mediated inhibition and allows for transcriptional activation of hedgehog pathway target genes. Required for the accumulation of KIF7, GLI2 and GLI3 in the cilia. Interacts with DLG5 at the ciliary base to induce the accumulation of KIF7 and GLI2 at the ciliary tip for GLI2 activation. The chain is Protein smoothened (SMO) from Homo sapiens (Human).